A 111-amino-acid chain; its full sequence is Large ribosomal subunit protein uL22 (111 aa).

This sequence belongs to the universal ribosomal protein uL22 family. Part of the 50S ribosomal subunit.

This protein binds specifically to 23S rRNA; its binding is stimulated by other ribosomal proteins, e.g. L4, L17, and L20. It is important during the early stages of 50S assembly. It makes multiple contacts with different domains of the 23S rRNA in the assembled 50S subunit and ribosome. Its function is as follows. The globular domain of the protein is located near the polypeptide exit tunnel on the outside of the subunit, while an extended beta-hairpin is found that lines the wall of the exit tunnel in the center of the 70S ribosome. The protein is Large ribosomal subunit protein uL22 of Chlamydia trachomatis serovar L2 (strain ATCC VR-902B / DSM 19102 / 434/Bu).